The following is an 86-amino-acid chain: High affinity immunoglobulin epsilon receptor subunit gamma (86 aa).

Residues 1–18 (MIPAVILFLLLLVEEAAA) form the signal peptide. The Extracellular segment spans residues 19-23 (LGEPQ). A helical transmembrane segment spans residues 24 to 44 (LCYILDAILFLYGIVLTLLYC). At 45–86 (RLKIQVRKADIASREKSDAVYTGLNTRNQETYETLKHEKPPQ) the chain is on the cytoplasmic side. The 29-residue stretch at 54–82 (DIASREKSDAVYTGLNTRNQETYETLKHE) folds into the ITAM domain. Phosphotyrosine occurs at positions 65 and 76. The residue at position 78 (Thr78) is a Phosphothreonine.

This sequence belongs to the CD3Z/FCER1G family. In terms of assembly, igE Fc receptor is a tetramer of an alpha chain, a beta chain, and two disulfide linked gamma chains. Associates with FCGR1A to form a functional receptor complex. The signaling subunit of immunoglobulin gamma (IgG) Fc receptor complex. As a homodimer or a heterodimer of CD247 and FCER1G, associates with the ligand binding subunit FCGR3A to form a functional receptor complex. Associates with CLEC6A. Interacts with CLEC4E. Interacts (via ITAM domain) with SYK (via SH2 domains); activates SYK, enabling integrin-mediated activation of neutrophils and macrophages. Interacts with common beta chain of interleukin 3 receptor CSF2RB and recruits SYK in response to IL3 stimulation; this interaction is direct. Interacts with CD300LH; the interaction may be indirect. Interacts with CD300LD. Interacts with TARM1. In terms of tissue distribution, expressed in leukocytes and pinealocytes. Expression in the pineal gland does not undergo circadian variations.

The protein resides in the cell membrane. Its function is as follows. Adapter protein containing an immunoreceptor tyrosine-based activation motif (ITAM) that transduces activation signals from various immunoreceptors. As a component of the high-affinity immunoglobulin E (IgE) receptor, mediates allergic inflammatory signaling in mast cells. As a constitutive component of interleukin-3 receptor complex, selectively mediates interleukin 4/IL4 production by basophils priming T-cells toward effector T-helper 2 subset. Associates with pattern recognition receptors CLEC4D and CLEC4E to form a functional signaling complex in myeloid cells. Binding of mycobacterial trehalose 6,6'-dimycolate (TDM) to this receptor complex leads to phosphorylation of ITAM, triggering activation of SYK, CARD9 and NF-kappa-B, consequently driving maturation of antigen-presenting cells and shaping antigen-specific priming of T-cells toward effector T-helper 1 and T-helper 17 cell subtypes. May function cooperatively with other activating receptors. Functionally linked to integrin beta-2/ITGB2-mediated neutrophil activation. Also involved in integrin alpha-2/ITGA2-mediated platelet activation. This is High affinity immunoglobulin epsilon receptor subunit gamma (Fcer1g) from Rattus norvegicus (Rat).